A 756-amino-acid chain; its full sequence is Lysyl oxidase homolog 4 (756 aa).

An N-terminal signal peptide occupies residues 1–24 (MAWSPPATLFLFLLLLGQPPPSRP). 4 consecutive SRCR domains span residues 32–133 (LRLV…VICH), 159–287 (VRLK…VSCV), 311–411 (VRLR…VRCN), and 421–529 (VRLA…VSCM). 17 cysteine pairs are disulfide-bonded: Cys-58-Cys-122, Cys-71-Cys-132, Cys-102-Cys-112, Cys-191-Cys-276, Cys-204-Cys-286, Cys-251-Cys-261, Cys-336-Cys-400, Cys-349-Cys-410, Cys-380-Cys-390, Cys-450-Cys-515, Cys-463-Cys-528, Cys-497-Cys-507, Cys-558-Cys-564, Cys-610-Cys-658, Cys-642-Cys-648, Cys-670-Cys-680, and Cys-717-Cys-731. Asn-198 carries an N-linked (GlcNAc...) asparagine glycan. The interval 533–736 (PDLVMNAQLV…WLHNCHTGNS (204 aa)) is lysyl-oxidase like. Positions 611, 613, and 615 each coordinate Cu cation. A glycan (N-linked (GlcNAc...) asparagine) is linked at Asn-629. The lysine tyrosylquinone (Lys-Tyr) cross-link spans 638–674 (KASFCLEDTNCPTGLQRRYACANFGEQGVTVGCWDTY). Tyr-674 is modified (2',4',5'-topaquinone).

It belongs to the lysyl oxidase family. It depends on Cu cation as a cofactor. Lysine tyrosylquinone residue serves as cofactor. The lysine tyrosylquinone cross-link (LTQ) is generated by condensation of the epsilon-amino group of a lysine with a topaquinone produced by oxidation of tyrosine. Post-translationally, may be proteolytically cleaved by BMP1. In terms of tissue distribution, expressed in many tissues, the highest levels among the tissues studied being in the skeletal muscle, testis and pancreas. Expressed in cartilage.

It localises to the secreted. The protein localises to the extracellular space. It carries out the reaction L-lysyl-[protein] + O2 + H2O = (S)-2-amino-6-oxohexanoyl-[protein] + H2O2 + NH4(+). Its activity is regulated as follows. Inhibited by beta-aminopropionitrile (BAPN). Catalyzes the oxidative deamination of lysine and hydroxylysine residues in collagen and elastin, resulting in the formation of covalent cross-linkages, and the stabilization of collagen and elastin fibers. This chain is Lysyl oxidase homolog 4 (LOXL4), found in Homo sapiens (Human).